We begin with the raw amino-acid sequence, 345 residues long: Dimethyladenosine transferase 1, mitochondrial (345 aa).

The N-terminal 27 residues, M1 to L27, are a transit peptide targeting the mitochondrion. Residues Q35–L38, N36, L38, G63, E85, D111, and N141 contribute to the S-adenosyl-L-methionine site.

This sequence belongs to the class I-like SAM-binding methyltransferase superfamily. rRNA adenine N(6)-methyltransferase family. KsgA subfamily. As to quaternary structure, interacts with mitochondrial RNA polymerase POLRMT. Interacts with TFAM.

The protein resides in the mitochondrion. In terms of biological role, S-adenosyl-L-methionine-dependent methyltransferase which specifically dimethylates mitochondrial 12S rRNA at the conserved stem loop. Also required for basal transcription of mitochondrial DNA, probably via its interaction with POLRMT and TFAM. Stimulates transcription independently of the methyltransferase activity. In Rattus norvegicus (Rat), this protein is Dimethyladenosine transferase 1, mitochondrial (Tfb1m).